The primary structure comprises 331 residues: Ketol-acid reductoisomerase (NADP(+)) (331 aa).

Positions 2–182 (ARMYYDADAN…GGTRGGILET (181 aa)) constitute a KARI N-terminal Rossmann domain. NADP(+) is bound by residues 25–28 (YGSQ), S51, S53, and 83–86 (DDVQ). H108 is a catalytic residue. Residue G134 participates in NADP(+) binding. The KARI C-terminal knotted domain maps to 183–328 (TFREETETDL…KDLRAMFSWL (146 aa)). Mg(2+) is bound by residues D191, E195, E227, and E231. S252 lines the substrate pocket.

It belongs to the ketol-acid reductoisomerase family. Mg(2+) serves as cofactor.

The catalysed reaction is (2R)-2,3-dihydroxy-3-methylbutanoate + NADP(+) = (2S)-2-acetolactate + NADPH + H(+). It catalyses the reaction (2R,3R)-2,3-dihydroxy-3-methylpentanoate + NADP(+) = (S)-2-ethyl-2-hydroxy-3-oxobutanoate + NADPH + H(+). It participates in amino-acid biosynthesis; L-isoleucine biosynthesis; L-isoleucine from 2-oxobutanoate: step 2/4. It functions in the pathway amino-acid biosynthesis; L-valine biosynthesis; L-valine from pyruvate: step 2/4. In terms of biological role, involved in the biosynthesis of branched-chain amino acids (BCAA). Catalyzes an alkyl-migration followed by a ketol-acid reduction of (S)-2-acetolactate (S2AL) to yield (R)-2,3-dihydroxy-isovalerate. In the isomerase reaction, S2AL is rearranged via a Mg-dependent methyl migration to produce 3-hydroxy-3-methyl-2-ketobutyrate (HMKB). In the reductase reaction, this 2-ketoacid undergoes a metal-dependent reduction by NADPH to yield (R)-2,3-dihydroxy-isovalerate. This is Ketol-acid reductoisomerase (NADP(+)) from Picosynechococcus sp. (strain ATCC 27264 / PCC 7002 / PR-6) (Agmenellum quadruplicatum).